Here is a 299-residue protein sequence, read N- to C-terminus: uncharacterized protein (299 aa).

This is an uncharacterized protein from Bacillus subtilis (strain 168).